The sequence spans 263 residues: 2-dehydro-3-deoxyphosphooctonate aldolase (263 aa).

Belongs to the KdsA family.

It localises to the cytoplasm. The catalysed reaction is D-arabinose 5-phosphate + phosphoenolpyruvate + H2O = 3-deoxy-alpha-D-manno-2-octulosonate-8-phosphate + phosphate. It participates in carbohydrate biosynthesis; 3-deoxy-D-manno-octulosonate biosynthesis; 3-deoxy-D-manno-octulosonate from D-ribulose 5-phosphate: step 2/3. Its pathway is bacterial outer membrane biogenesis; lipopolysaccharide biosynthesis. This is 2-dehydro-3-deoxyphosphooctonate aldolase from Wolinella succinogenes (strain ATCC 29543 / DSM 1740 / CCUG 13145 / JCM 31913 / LMG 7466 / NCTC 11488 / FDC 602W) (Vibrio succinogenes).